Reading from the N-terminus, the 258-residue chain is Aquaporin PIP1-2 (258 aa).

Residues 1–37 (MEGKEEDVRLGANKFTERQPIGTAAQSQDKDYKEPPP) are disordered. Topologically, residues 1-55 (MEGKEEDVRLGANKFTERQPIGTAAQSQDKDYKEPPPAPLFEPGELSSWSFYRAG) are cytoplasmic. A helical membrane pass occupies residues 56–76 (IAEFVATFLFLYITILTVMGV). Residues 77-89 (VKSSTKCSTVGIQ) lie on the Extracellular side of the membrane. The chain crosses the membrane as a helical span at residues 90-110 (GIAWAFGGMIFALVYCTAGIS). The Cytoplasmic segment spans residues 111–133 (GGHINPAVTFGLFLARKLSLTRA). The short motif at 115 to 117 (NPA) is the NPA 1 element. The chain crosses the membrane as a helical span at residues 134–154 (LFYMVMQCLGAICGAGVVKGF). The Extracellular segment spans residues 155 to 175 (QKGLYENNGGGANVVAPGYTK). The chain crosses the membrane as a helical span at residues 176 to 196 (GDGLGAEIVGTFILVYTVFSA). Over 197-209 (TDAKRSARDSHVP) the chain is Cytoplasmic. A helical membrane pass occupies residues 210 to 230 (ILAPLPIGFAVFLVHLATIPI). Residues 231–258 (TGTGINPARSLGAAIIYNKGHAWDDHWI) lie on the Extracellular side of the membrane. An NPA 2 motif is present at residues 236–238 (NPA).

This sequence belongs to the MIP/aquaporin (TC 1.A.8) family. PIP (TC 1.A.8.11) subfamily. As to expression, barely detectable in roots, leaves and fruits.

It localises to the cell membrane. In terms of biological role, water channel required to facilitate the transport of water across cell membrane; mercury-insensitive. Contributes to the tolerance to multiple abiotic stresses including salt (NaCl), cold and water deprivation, by modulating cytosolic K(+)/Na(+) ratio, maintaining osmotic balance, and reducing membrane injury (e.g. oxidative injury). The polypeptide is Aquaporin PIP1-2 (Musa acuminata (Banana)).